Consider the following 344-residue polypeptide: Glycerol-3-phosphate dehydrogenase [NAD(P)+] (344 aa).

NADPH-binding residues include Ser18, Tyr19, His39, and Lys113. Residues Lys113, Gly142, and Thr144 each contribute to the sn-glycerol 3-phosphate site. NADPH is bound at residue Ala146. Lys198, Asp251, Ser261, Arg262, and Asn263 together coordinate sn-glycerol 3-phosphate. Residue Lys198 is the Proton acceptor of the active site. Residue Arg262 coordinates NADPH. 2 residues coordinate NADPH: Ile286 and Glu288.

The protein belongs to the NAD-dependent glycerol-3-phosphate dehydrogenase family.

It localises to the cytoplasm. It carries out the reaction sn-glycerol 3-phosphate + NAD(+) = dihydroxyacetone phosphate + NADH + H(+). The catalysed reaction is sn-glycerol 3-phosphate + NADP(+) = dihydroxyacetone phosphate + NADPH + H(+). It participates in membrane lipid metabolism; glycerophospholipid metabolism. Functionally, catalyzes the reduction of the glycolytic intermediate dihydroxyacetone phosphate (DHAP) to sn-glycerol 3-phosphate (G3P), the key precursor for phospholipid synthesis. This is Glycerol-3-phosphate dehydrogenase [NAD(P)+] from Blochmanniella pennsylvanica (strain BPEN).